A 176-amino-acid polypeptide reads, in one-letter code: Probable DNA-directed RNA polymerase subunit delta (176 aa).

Residues 14-81 (CSMIEVVHSV…GENRWGLRSW (68 aa)) form the HTH HARE-type domain. A disordered region spans residues 91–176 (ILPQPKPKKK…ETEEEEEEEL (86 aa)). A compositionally biased stretch (acidic residues) spans 106 to 176 (DGFDDYIEED…ETEEEEEEEL (71 aa)).

The protein belongs to the RpoE family. As to quaternary structure, RNAP is composed of a core of 2 alpha, a beta and a beta' subunits. The core is associated with a delta subunit and one of several sigma factors.

Functionally, participates in both the initiation and recycling phases of transcription. In the presence of the delta subunit, RNAP displays an increased specificity of transcription, a decreased affinity for nucleic acids, and an increased efficiency of RNA synthesis because of enhanced recycling. The sequence is that of Probable DNA-directed RNA polymerase subunit delta from Bacillus thuringiensis (strain Al Hakam).